A 259-amino-acid chain; its full sequence is 5'-nucleotidase SurE (259 aa).

The a divalent metal cation site is built by Asp8, Asp9, Ser40, and Asn92.

Belongs to the SurE nucleotidase family. Requires a divalent metal cation as cofactor.

It is found in the cytoplasm. It catalyses the reaction a ribonucleoside 5'-phosphate + H2O = a ribonucleoside + phosphate. Its function is as follows. Nucleotidase that shows phosphatase activity on nucleoside 5'-monophosphates. The chain is 5'-nucleotidase SurE from Xanthomonas euvesicatoria pv. vesicatoria (strain 85-10) (Xanthomonas campestris pv. vesicatoria).